The chain runs to 129 residues: Small ribosomal subunit protein uS11 (129 aa).

The protein belongs to the universal ribosomal protein uS11 family. As to quaternary structure, part of the 30S ribosomal subunit. Interacts with proteins S7 and S18. Binds to IF-3.

Functionally, located on the platform of the 30S subunit, it bridges several disparate RNA helices of the 16S rRNA. Forms part of the Shine-Dalgarno cleft in the 70S ribosome. This is Small ribosomal subunit protein uS11 from Aliivibrio fischeri (strain ATCC 700601 / ES114) (Vibrio fischeri).